A 686-amino-acid chain; its full sequence is Potassium-transporting ATPase ATP-binding subunit 2 (686 aa).

The next 4 membrane-spanning stretches (helical) occupy residues 37–57 (MFVVEIGAIISLALCFFPNLF), 64–84 (MILYNSLVFIILLLTLLFANF), 223–243 (LLVSLTIIFLIVIVSLYPMAI), and 255–275 (VALTVCLIPTTIGGLLSAIGI). The active-site 4-aspartylphosphate intermediate is the Asp-306. Residues Asp-343, Glu-347, 376-383 (FTAQTRMS), and Lys-395 each bind ATP. Residues Asp-518 and Asp-522 each contribute to the Mg(2+) site. 3 helical membrane passes run 588–608 (FAIIPAMFLAIIPQMQVLNIM), 616–636 (AILSALIFNAIIIPCLIPLAM), and 656–676 (VYGVGGMIVPFIGIKLIDLVI).

The protein belongs to the cation transport ATPase (P-type) (TC 3.A.3) family. Type IA subfamily. The system is composed of three essential subunits: KdpA, KdpB and KdpC.

It localises to the cell membrane. The catalysed reaction is K(+)(out) + ATP + H2O = K(+)(in) + ADP + phosphate + H(+). In terms of biological role, part of the high-affinity ATP-driven potassium transport (or Kdp) system, which catalyzes the hydrolysis of ATP coupled with the electrogenic transport of potassium into the cytoplasm. This subunit is responsible for energy coupling to the transport system and for the release of the potassium ions to the cytoplasm. The protein is Potassium-transporting ATPase ATP-binding subunit 2 of Listeria innocua serovar 6a (strain ATCC BAA-680 / CLIP 11262).